The following is a 305-amino-acid chain: MNFNYFILVLFFITSGHAKSETREVHQEAENHIKRGSNTGFNFKTLDKEKRSAEEQNLAEHLVTRGSNKGFNFMVDMINALSNGKRSAEEQDLAEHLVTRGSNKGFNFMVDMINALSNGKRSAEEQDLAEDLVTRGSNKGFNFMVDMIQALSKGKRSAEDQDLAEDLVTRGSNKGFNFMVDMIQALSNGKRSAEEQDLAEHLVTRGSNKGFNFMVDMINALSNGKRSAEEQDLSEDLVTRGSNKGFNFMVDMINALSNGKRSAEEQDLVEDLVTRRSNKGFNFMVDMIQALSKGKRSAEQEKDMK.

Residues 1-18 (MNFNYFILVLFFITSGHA) form the signal peptide. 2 consecutive propeptides follow at residues 19 to 35 (KSET…HIKR) and 52 to 65 (SAEE…LVTR). Asn-83 carries the asparagine amide modification. The propeptide occupies 87 to 100 (SAEEQDLAEHLVTR). Asparagine amide is present on Asn-118. The propeptide occupies 122-135 (SAEEQDLAEDLVTR). At Lys-153 the chain carries Lysine amide. Positions 157 to 170 (SAEDQDLAEDLVTR) are excised as a propeptide. Residue Asn-188 is modified to Asparagine amide. A propeptide spanning residues 192–205 (SAEEQDLAEHLVTR) is cleaved from the precursor. Asn-223 is modified (asparagine amide). The propeptide occupies 227–240 (SAEEQDLSEDLVTR). Asparagine amide is present on Asn-258. Positions 262 to 275 (SAEEQDLVEDLVTR) are excised as a propeptide. Lysine amide is present on Lys-293. Residues 297 to 305 (SAEQEKDMK) constitute a propeptide that is removed on maturation.

The protein belongs to the maximin-S family. In terms of tissue distribution, expressed by the skin dorsal glands.

The protein localises to the secreted. Its function is as follows. Maximin-S1 has no antimicrobial activity. Has no hemolytic activity. Maximin-S2 has an activity against mycoplasma but has no activity against common Gram-positive and Gram-negative bacteria nor fungi. Has no hemolytic activity. Functionally, maximin-S3 has an activity against mycoplasma but has no activity against common Gram-positive and Gram-negative bacteria nor fungi. Has no hemolytic activity. In terms of biological role, maximin-S4 has an activity against mycoplasma but has no activity against common Gram-positive and Gram-negative bacteria nor fungi. Has no hemolytic activity. Its function is as follows. Maximin-S5 has an activity against mycoplasma but has no activity against common Gram-positive and Gram-negative bacteria nor fungi. Has no hemolytic activity. The sequence is that of Maximins-S type B/C from Bombina maxima (Giant fire-bellied toad).